We begin with the raw amino-acid sequence, 208 residues long: Imidazoleglycerol-phosphate dehydratase (208 aa).

It belongs to the imidazoleglycerol-phosphate dehydratase family.

It is found in the cytoplasm. It catalyses the reaction D-erythro-1-(imidazol-4-yl)glycerol 3-phosphate = 3-(imidazol-4-yl)-2-oxopropyl phosphate + H2O. The protein operates within amino-acid biosynthesis; L-histidine biosynthesis; L-histidine from 5-phospho-alpha-D-ribose 1-diphosphate: step 6/9. The sequence is that of Imidazoleglycerol-phosphate dehydratase from Anaeromyxobacter dehalogenans (strain 2CP-1 / ATCC BAA-258).